Consider the following 508-residue polypeptide: Non-structural protein 1 (508 aa).

Residues 424 to 453 show a composition bias toward polar residues; the sequence is NTESTTTNNAQSPVSDPVNASANVKTSPAG. The disordered stretch occupies residues 424–464; that stretch reads NTESTTTNNAQSPVSDPVNASANVKTSPAGTHTDESVMKKE. The span at 455-464 shows a compositional bias: basic and acidic residues; sequence HTDESVMKKE.

The protein is Non-structural protein 1 (Segment-5) of Banna virus (BAV).